Consider the following 421-residue polypeptide: E3 ubiquitin-protein ligase MARCHF4 (421 aa).

A signal peptide spans Met-1–Ser-16. The disordered stretch occupies residues Glu-60–Asn-79. Over residues Gly-65–Leu-77 the composition is skewed to polar residues. Residues Asp-135–Ile-195 form an RING-CH-type zinc finger. 8 residues coordinate Zn(2+): Cys-143, Cys-146, Cys-159, Cys-161, His-169, Cys-172, Cys-185, and Cys-188. The next 2 membrane-spanning stretches (helical) occupy residues Ile-218–Ser-238 and Leu-252–Val-272. Disordered stretches follow at residues Pro-319–His-385 and Gln-401–Val-421. Polar residues-rich tracts occupy residues Thr-367–Pro-380 and Pro-403–Arg-412.

It localises to the golgi apparatus membrane. The catalysed reaction is S-ubiquitinyl-[E2 ubiquitin-conjugating enzyme]-L-cysteine + [acceptor protein]-L-lysine = [E2 ubiquitin-conjugating enzyme]-L-cysteine + N(6)-ubiquitinyl-[acceptor protein]-L-lysine.. Its pathway is protein modification; protein ubiquitination. Its function is as follows. E3 ubiquitin-protein ligase. E3 ubiquitin ligases accept ubiquitin from an E2 ubiquitin-conjugating enzyme in the form of a thioester and then directly transfer the ubiquitin to targeted substrates. The sequence is that of E3 ubiquitin-protein ligase MARCHF4 (marchf4) from Danio rerio (Zebrafish).